Here is a 349-residue protein sequence, read N- to C-terminus: Methylthioribose-1-phosphate isomerase (349 aa).

Substrate-binding positions include 49 to 51 (RGA), Arg-93, and Gln-201. Asp-242 (proton donor) is an active-site residue. Residue 252 to 253 (NK) participates in substrate binding.

Belongs to the EIF-2B alpha/beta/delta subunits family. MtnA subfamily.

The catalysed reaction is 5-(methylsulfanyl)-alpha-D-ribose 1-phosphate = 5-(methylsulfanyl)-D-ribulose 1-phosphate. It functions in the pathway amino-acid biosynthesis; L-methionine biosynthesis via salvage pathway; L-methionine from S-methyl-5-thio-alpha-D-ribose 1-phosphate: step 1/6. Catalyzes the interconversion of methylthioribose-1-phosphate (MTR-1-P) into methylthioribulose-1-phosphate (MTRu-1-P). This Petrotoga mobilis (strain DSM 10674 / SJ95) protein is Methylthioribose-1-phosphate isomerase.